The chain runs to 582 residues: Putative BTB/POZ domain-containing protein At3g08660 (582 aa).

The disordered stretch occupies residues 1-21; it reads MGSDSTLSLPSSSPPCNNRSS. Residues 36 to 103 form the BTB domain; sequence GDIIVVVDGE…CYGINFDITA (68 aa). Residues 196–466 enclose the NPH3 domain; sequence EMWTEELSAL…VRVLYTEQLR (271 aa). Residue Y407 is modified to Phosphotyrosine. A disordered region spans residues 558–582; the sequence is GGETRQKVNRKSRSVSERKSSRSGR. The span at 571-582 shows a compositional bias: basic and acidic residues; the sequence is SVSERKSSRSGR.

This sequence belongs to the NPH3 family.

It participates in protein modification; protein ubiquitination. Its function is as follows. May act as a substrate-specific adapter of an E3 ubiquitin-protein ligase complex (CUL3-RBX1-BTB) which mediates the ubiquitination and subsequent proteasomal degradation of target proteins. The polypeptide is Putative BTB/POZ domain-containing protein At3g08660 (Arabidopsis thaliana (Mouse-ear cress)).